Here is a 1342-residue protein sequence, read N- to C-terminus: DNA-directed RNA polymerase subunit beta (1342 aa).

Belongs to the RNA polymerase beta chain family. As to quaternary structure, the RNAP catalytic core consists of 2 alpha, 1 beta, 1 beta' and 1 omega subunit. When a sigma factor is associated with the core the holoenzyme is formed, which can initiate transcription.

The catalysed reaction is RNA(n) + a ribonucleoside 5'-triphosphate = RNA(n+1) + diphosphate. Its function is as follows. DNA-dependent RNA polymerase catalyzes the transcription of DNA into RNA using the four ribonucleoside triphosphates as substrates. The polypeptide is DNA-directed RNA polymerase subunit beta (Pectobacterium carotovorum subsp. carotovorum (strain PC1)).